The primary structure comprises 183 residues: Small ribosomal subunit protein bS20c (183 aa).

Residues 1–68 (MAAISMACVS…FQRRGFSVVC (68 aa)) constitute a chloroplast transit peptide. The interval 79 to 99 (AAKRTRQAETRRLRNKARKSE) is disordered.

As to quaternary structure, component of the chloroplast small ribosomal subunit (SSU). Mature 70S chloroplast ribosomes of higher plants consist of a small (30S) and a large (50S) subunit. The 30S small subunit contains 1 molecule of ribosomal RNA (16S rRNA) and 24 different proteins. The 50S large subunit contains 3 rRNA molecules (23S, 5S and 4.5S rRNA) and 33 different proteins.

The protein localises to the plastid. The protein resides in the chloroplast. Component of the chloroplast ribosome (chloro-ribosome), a dedicated translation machinery responsible for the synthesis of chloroplast genome-encoded proteins, including proteins of the transcription and translation machinery and components of the photosynthetic apparatus. This is Small ribosomal subunit protein bS20c (RPS20) from Spinacia oleracea (Spinach).